Here is a 182-residue protein sequence, read N- to C-terminus: ATP-dependent protease subunit HslV (182 aa).

Residue Thr-2 is part of the active site. Residues Gly-157, Cys-160, and Thr-163 each contribute to the Na(+) site.

The protein belongs to the peptidase T1B family. HslV subfamily. As to quaternary structure, a double ring-shaped homohexamer of HslV is capped on each side by a ring-shaped HslU homohexamer. The assembly of the HslU/HslV complex is dependent on binding of ATP.

Its subcellular location is the cytoplasm. It carries out the reaction ATP-dependent cleavage of peptide bonds with broad specificity.. Its activity is regulated as follows. Allosterically activated by HslU binding. Protease subunit of a proteasome-like degradation complex believed to be a general protein degrading machinery. The polypeptide is ATP-dependent protease subunit HslV (Sodalis glossinidius (strain morsitans)).